Reading from the N-terminus, the 957-residue chain is Glycine dehydrogenase (decarboxylating) (957 aa).

Lys-708 carries the post-translational modification N6-(pyridoxal phosphate)lysine.

The protein belongs to the GcvP family. In terms of assembly, the glycine cleavage system is composed of four proteins: P, T, L and H. Pyridoxal 5'-phosphate serves as cofactor.

The catalysed reaction is N(6)-[(R)-lipoyl]-L-lysyl-[glycine-cleavage complex H protein] + glycine + H(+) = N(6)-[(R)-S(8)-aminomethyldihydrolipoyl]-L-lysyl-[glycine-cleavage complex H protein] + CO2. In terms of biological role, the glycine cleavage system catalyzes the degradation of glycine. The P protein binds the alpha-amino group of glycine through its pyridoxal phosphate cofactor; CO(2) is released and the remaining methylamine moiety is then transferred to the lipoamide cofactor of the H protein. The protein is Glycine dehydrogenase (decarboxylating) of Shigella dysenteriae serotype 1 (strain Sd197).